Consider the following 384-residue polypeptide: Glutamate 5-kinase (384 aa).

Lys24 contributes to the ATP binding site. Substrate contacts are provided by Ser64, Asp149, and Asn161. ATP contacts are provided by residues 181 to 182 (TD) and 223 to 229 (TGGMRTK). In terms of domain architecture, PUA spans 288–370 (PGAILIDAGA…RDIQTLLGYT (83 aa)).

This sequence belongs to the glutamate 5-kinase family.

Its subcellular location is the cytoplasm. The enzyme catalyses L-glutamate + ATP = L-glutamyl 5-phosphate + ADP. The protein operates within amino-acid biosynthesis; L-proline biosynthesis; L-glutamate 5-semialdehyde from L-glutamate: step 1/2. In terms of biological role, catalyzes the transfer of a phosphate group to glutamate to form L-glutamate 5-phosphate. The chain is Glutamate 5-kinase from Xylella fastidiosa (strain M23).